A 333-amino-acid polypeptide reads, in one-letter code: DnaJ homolog subfamily C member 25 homolog (333 aa).

The chain crosses the membrane as a helical span at residues 8–28 (LVLLALLPTMALGLLEGLYCG). The J domain maps to 31 to 99 (NCYDVLGVTR…ESRTDYDYML (69 aa)). A helical transmembrane segment spans residues 123-143 (VRVVIVVVLTIVSVIQYYSGW). A coiled-coil region spans residues 158-208 (KYRNQALEIARDEIQEKIQKKGKNRMSKNDQRDELERIIRRVIEEKMDVKG). The helical transmembrane segment at 218–238 (VLWVQLIICPYTILSFIVWHA) threads the bilayer.

The protein belongs to the DNAJC25 family.

The protein resides in the membrane. The polypeptide is DnaJ homolog subfamily C member 25 homolog (Drosophila melanogaster (Fruit fly)).